A 619-amino-acid polypeptide reads, in one-letter code: Guanylate cyclase soluble subunit beta-1 (619 aa).

His-105 is a heme binding site. Residues 421-554 (TILFSGIVGF…NTVNLTSRTE (134 aa)) form the Guanylate cyclase domain.

The protein belongs to the adenylyl cyclase class-4/guanylyl cyclase family. In terms of assembly, the active enzyme is formed by a heterodimer of an alpha and a beta subunit. Heterodimer with GUCY1A1. Can also form inactive homodimers in vitro. Heme is required as a cofactor. Lung and brain.

Its subcellular location is the cytoplasm. The enzyme catalyses GTP = 3',5'-cyclic GMP + diphosphate. Activated by nitric oxide in the presence of magnesium or manganese ions, binding of NO to the heme iron increases catalytic activity up to 400 folds. Its function is as follows. Mediates responses to nitric oxide (NO) by catalyzing the biosynthesis of the signaling molecule cGMP. In Bos taurus (Bovine), this protein is Guanylate cyclase soluble subunit beta-1 (GUCY1B1).